Here is a 174-residue protein sequence, read N- to C-terminus: MAEKRNIFLVGPMGAGKSTIGRHLAQQLHMEFIDSDTVIEERTGADIAWVFDVEGEEGFRKREEAVINDLTEQQGIVLATGGGSVISKENRNRLSARGIVVYLETTIEKQLARTNRDKKRPLLQTDCPREVLEQLAEDRNPLYEEIADITVRTDDQSAKVVANQIVKMLEEHIM.

ATP is bound at residue 14–19 (GAGKST). Ser18 lines the Mg(2+) pocket. Substrate is bound by residues Asp36, Arg60, and Gly82. An ATP-binding site is contributed by Arg120. Residue Arg139 participates in substrate binding. Gln156 is a binding site for ATP.

Belongs to the shikimate kinase family. Monomer. It depends on Mg(2+) as a cofactor.

The protein localises to the cytoplasm. The enzyme catalyses shikimate + ATP = 3-phosphoshikimate + ADP + H(+). It participates in metabolic intermediate biosynthesis; chorismate biosynthesis; chorismate from D-erythrose 4-phosphate and phosphoenolpyruvate: step 5/7. Its function is as follows. Catalyzes the specific phosphorylation of the 3-hydroxyl group of shikimic acid using ATP as a cosubstrate. This Vibrio cholerae serotype O1 (strain ATCC 39541 / Classical Ogawa 395 / O395) protein is Shikimate kinase.